The following is a 627-amino-acid chain: 1-deoxy-D-xylulose-5-phosphate synthase (627 aa).

Thiamine diphosphate contacts are provided by residues His80 and 121-123 (GHS). A Mg(2+)-binding site is contributed by Asp152. Thiamine diphosphate contacts are provided by residues 153-154 (GA), Asn181, Tyr288, and Glu370. Asn181 lines the Mg(2+) pocket.

Belongs to the transketolase family. DXPS subfamily. In terms of assembly, homodimer. Mg(2+) is required as a cofactor. It depends on thiamine diphosphate as a cofactor.

It catalyses the reaction D-glyceraldehyde 3-phosphate + pyruvate + H(+) = 1-deoxy-D-xylulose 5-phosphate + CO2. The protein operates within metabolic intermediate biosynthesis; 1-deoxy-D-xylulose 5-phosphate biosynthesis; 1-deoxy-D-xylulose 5-phosphate from D-glyceraldehyde 3-phosphate and pyruvate: step 1/1. Catalyzes the acyloin condensation reaction between C atoms 2 and 3 of pyruvate and glyceraldehyde 3-phosphate to yield 1-deoxy-D-xylulose-5-phosphate (DXP). The sequence is that of 1-deoxy-D-xylulose-5-phosphate synthase from Aliivibrio salmonicida (strain LFI1238) (Vibrio salmonicida (strain LFI1238)).